We begin with the raw amino-acid sequence, 360 residues long: Phenylalanine--tRNA ligase alpha subunit (360 aa).

Glutamate 260 contributes to the Mg(2+) binding site.

This sequence belongs to the class-II aminoacyl-tRNA synthetase family. Phe-tRNA synthetase alpha subunit type 1 subfamily. As to quaternary structure, tetramer of two alpha and two beta subunits. It depends on Mg(2+) as a cofactor.

It is found in the cytoplasm. The enzyme catalyses tRNA(Phe) + L-phenylalanine + ATP = L-phenylalanyl-tRNA(Phe) + AMP + diphosphate + H(+). In Paracoccus denitrificans (strain Pd 1222), this protein is Phenylalanine--tRNA ligase alpha subunit.